Here is a 457-residue protein sequence, read N- to C-terminus: Cysteine--tRNA ligase (457 aa).

A Zn(2+)-binding site is contributed by cysteine 28. The 'HIGH' region motif lies at proline 30 to asparagine 40. Zn(2+) contacts are provided by cysteine 212, histidine 237, and glutamate 241. A 'KMSKS' region motif is present at residues lysine 270–serine 274. Position 273 (lysine 273) interacts with ATP.

Belongs to the class-I aminoacyl-tRNA synthetase family. In terms of assembly, monomer. Requires Zn(2+) as cofactor.

It localises to the cytoplasm. The catalysed reaction is tRNA(Cys) + L-cysteine + ATP = L-cysteinyl-tRNA(Cys) + AMP + diphosphate. The sequence is that of Cysteine--tRNA ligase from Wolbachia sp. subsp. Drosophila simulans (strain wRi).